A 357-amino-acid polypeptide reads, in one-letter code: Phospho-N-acetylmuramoyl-pentapeptide-transferase (357 aa).

Transmembrane regions (helical) follow at residues 23–43, 70–90, 91–111, 127–147, 171–191, 196–216, 236–256, 260–280, 286–306, and 334–354; these read AIFS…YFIY, TMGG…YCNL, SNIY…IGFI, LKWK…MIKI, YLYI…VNLT, GLAI…SLFS, LAIL…FNSY, VFMG…IAIL, LLII…LQII, and LIIV…LISL.

The protein belongs to the glycosyltransferase 4 family. MraY subfamily. Mg(2+) is required as a cofactor.

It is found in the cell inner membrane. It catalyses the reaction UDP-N-acetyl-alpha-D-muramoyl-L-alanyl-gamma-D-glutamyl-meso-2,6-diaminopimeloyl-D-alanyl-D-alanine + di-trans,octa-cis-undecaprenyl phosphate = di-trans,octa-cis-undecaprenyl diphospho-N-acetyl-alpha-D-muramoyl-L-alanyl-D-glutamyl-meso-2,6-diaminopimeloyl-D-alanyl-D-alanine + UMP. Its pathway is cell wall biogenesis; peptidoglycan biosynthesis. Functionally, catalyzes the initial step of the lipid cycle reactions in the biosynthesis of the cell wall peptidoglycan: transfers peptidoglycan precursor phospho-MurNAc-pentapeptide from UDP-MurNAc-pentapeptide onto the lipid carrier undecaprenyl phosphate, yielding undecaprenyl-pyrophosphoryl-MurNAc-pentapeptide, known as lipid I. This is Phospho-N-acetylmuramoyl-pentapeptide-transferase from Buchnera aphidicola subsp. Acyrthosiphon pisum (strain APS) (Acyrthosiphon pisum symbiotic bacterium).